A 247-amino-acid chain; its full sequence is Homeobox-leucine zipper protein HOX17 (247 aa).

Residues 58–81 (ERAGLRGGGGSDEEDGGCGIDGSR) form a disordered region. The homeobox DNA-binding region spans 79 to 138 (GSRKKLRLSKDQSAVLEDSFREHPTLNPRQKATLAQQLGLRPRQVEVWFQNRRARTKLKQ). The leucine-zipper stretch occupies residues 137 to 182 (KQTEVDCEFLKRCCETLTEENRRLQKEVQELRALKLVSPHLYMNMS).

This sequence belongs to the HD-ZIP homeobox family. Class II subfamily. In terms of tissue distribution, expressed in seedlings, roots, stems, leaf sheaths and blades and panicles.

It localises to the nucleus. Probable transcription factor. The chain is Homeobox-leucine zipper protein HOX17 (HOX17) from Oryza sativa subsp. indica (Rice).